Here is a 1404-residue protein sequence, read N- to C-terminus: DNA-directed RNA polymerase subunit beta' (1404 aa).

Zn(2+) contacts are provided by cysteine 70, cysteine 72, cysteine 85, and cysteine 88. The Mg(2+) site is built by aspartate 460, aspartate 462, and aspartate 464. Zn(2+) contacts are provided by cysteine 814, cysteine 888, cysteine 895, and cysteine 898.

The protein belongs to the RNA polymerase beta' chain family. The RNAP catalytic core consists of 2 alpha, 1 beta, 1 beta' and 1 omega subunit. When a sigma factor is associated with the core the holoenzyme is formed, which can initiate transcription. Mg(2+) serves as cofactor. Requires Zn(2+) as cofactor.

It catalyses the reaction RNA(n) + a ribonucleoside 5'-triphosphate = RNA(n+1) + diphosphate. Its function is as follows. DNA-dependent RNA polymerase catalyzes the transcription of DNA into RNA using the four ribonucleoside triphosphates as substrates. This chain is DNA-directed RNA polymerase subunit beta', found in Shewanella pealeana (strain ATCC 700345 / ANG-SQ1).